Here is a 188-residue protein sequence, read N- to C-terminus: Large ribosomal subunit protein eL18 (188 aa).

Lysine 119 participates in a covalent cross-link: Glycyl lysine isopeptide (Lys-Gly) (interchain with G-Cter in SUMO2). The residue at position 130 (serine 130) is a Phosphoserine. Residues 151–188 (HFGKAPGTPHSHTKPYVRSKGRKFERARGRRASRGYKN) are disordered. Threonine 158 bears the Phosphothreonine mark. Basic residues-rich tracts occupy residues 161 to 171 (SHTKPYVRSKG) and 178 to 188 (RGRRASRGYKN). Lysine 164 is covalently cross-linked (Glycyl lysine isopeptide (Lys-Gly) (interchain with G-Cter in SUMO2)).

It belongs to the eukaryotic ribosomal protein eL18 family. In terms of assembly, component of the large ribosomal subunit.

It localises to the cytoplasm. The protein resides in the cytosol. It is found in the rough endoplasmic reticulum. Component of the large ribosomal subunit. The ribosome is a large ribonucleoprotein complex responsible for the synthesis of proteins in the cell. The polypeptide is Large ribosomal subunit protein eL18 (RPL18) (Canis lupus familiaris (Dog)).